A 473-amino-acid chain; its full sequence is Photosystem II CP43 reaction center protein (473 aa).

The propeptide occupies M1 to E14. The residue at position 15 (T15) is an N-acetylthreonine. The residue at position 15 (T15) is a Phosphothreonine. 5 helical membrane-spanning segments follow: residues L69 to A93, L134 to N155, K178 to T200, K255 to S275, and W291 to A312. Residue E367 participates in [CaMn4O5] cluster binding. Residues R447 to P471 traverse the membrane as a helical segment.

This sequence belongs to the PsbB/PsbC family. PsbC subfamily. In terms of assembly, PSII is composed of 1 copy each of membrane proteins PsbA, PsbB, PsbC, PsbD, PsbE, PsbF, PsbH, PsbI, PsbJ, PsbK, PsbL, PsbM, PsbT, PsbX, PsbY, PsbZ, Psb30/Ycf12, at least 3 peripheral proteins of the oxygen-evolving complex and a large number of cofactors. It forms dimeric complexes. It depends on Binds multiple chlorophylls and provides some of the ligands for the Ca-4Mn-5O cluster of the oxygen-evolving complex. It may also provide a ligand for a Cl- that is required for oxygen evolution. PSII binds additional chlorophylls, carotenoids and specific lipids. as a cofactor.

The protein localises to the plastid. It is found in the chloroplast thylakoid membrane. One of the components of the core complex of photosystem II (PSII). It binds chlorophyll and helps catalyze the primary light-induced photochemical processes of PSII. PSII is a light-driven water:plastoquinone oxidoreductase, using light energy to abstract electrons from H(2)O, generating O(2) and a proton gradient subsequently used for ATP formation. The sequence is that of Photosystem II CP43 reaction center protein from Fagopyrum esculentum subsp. ancestrale (Wild buckwheat).